Here is a 262-residue protein sequence, read N- to C-terminus: Hydroxyethylthiazole kinase (262 aa).

Met50 contacts substrate. The ATP site is built by Arg125 and Thr171. A substrate-binding site is contributed by Gly198.

The protein belongs to the Thz kinase family. It depends on Mg(2+) as a cofactor.

The enzyme catalyses 5-(2-hydroxyethyl)-4-methylthiazole + ATP = 4-methyl-5-(2-phosphooxyethyl)-thiazole + ADP + H(+). It functions in the pathway cofactor biosynthesis; thiamine diphosphate biosynthesis; 4-methyl-5-(2-phosphoethyl)-thiazole from 5-(2-hydroxyethyl)-4-methylthiazole: step 1/1. Functionally, catalyzes the phosphorylation of the hydroxyl group of 4-methyl-5-beta-hydroxyethylthiazole (THZ). The sequence is that of Hydroxyethylthiazole kinase from Escherichia coli O157:H7.